A 565-amino-acid polypeptide reads, in one-letter code: Dihydroxy-acid dehydratase (565 aa).

Asp-80 serves as a coordination point for Mg(2+). Residue Cys-121 participates in [2Fe-2S] cluster binding. Asp-122 and Lys-123 together coordinate Mg(2+). Residue Lys-123 is modified to N6-carboxylysine. Cys-194 contacts [2Fe-2S] cluster. Residue Glu-447 participates in Mg(2+) binding. Ser-473 acts as the Proton acceptor in catalysis.

It belongs to the IlvD/Edd family. As to quaternary structure, homodimer. The cofactor is [2Fe-2S] cluster. It depends on Mg(2+) as a cofactor.

The enzyme catalyses (2R)-2,3-dihydroxy-3-methylbutanoate = 3-methyl-2-oxobutanoate + H2O. It carries out the reaction (2R,3R)-2,3-dihydroxy-3-methylpentanoate = (S)-3-methyl-2-oxopentanoate + H2O. The protein operates within amino-acid biosynthesis; L-isoleucine biosynthesis; L-isoleucine from 2-oxobutanoate: step 3/4. It participates in amino-acid biosynthesis; L-valine biosynthesis; L-valine from pyruvate: step 3/4. Functions in the biosynthesis of branched-chain amino acids. Catalyzes the dehydration of (2R,3R)-2,3-dihydroxy-3-methylpentanoate (2,3-dihydroxy-3-methylvalerate) into 2-oxo-3-methylpentanoate (2-oxo-3-methylvalerate) and of (2R)-2,3-dihydroxy-3-methylbutanoate (2,3-dihydroxyisovalerate) into 2-oxo-3-methylbutanoate (2-oxoisovalerate), the penultimate precursor to L-isoleucine and L-valine, respectively. This is Dihydroxy-acid dehydratase from Chlorobium luteolum (strain DSM 273 / BCRC 81028 / 2530) (Pelodictyon luteolum).